The chain runs to 363 residues: Protein RecA (363 aa).

An ATP-binding site is contributed by 78 to 85 (GPESGGKT).

The protein belongs to the RecA family.

Its subcellular location is the cytoplasm. Functionally, can catalyze the hydrolysis of ATP in the presence of single-stranded DNA, the ATP-dependent uptake of single-stranded DNA by duplex DNA, and the ATP-dependent hybridization of homologous single-stranded DNAs. It interacts with LexA causing its activation and leading to its autocatalytic cleavage. Probably involved in base excision repair. Its function is as follows. Following severe irradiation (7 kGy of gamma irradiation) genomic DNA is fragmented. DNA is progressively degraded for the first 1.5 hours after IR, in a step promoted by RecA and counterbalanced by DNA Pol I and Pol III, followed by massive DNA synthesis and genome reassembly in the next hour. Optimal priming of DNA synthesis requires both RecA and RadA, Pol III initiates DNA synthesis while both Pol I and Pol III are required for its continuation. In the absence of RecA the majority of the chromosome is still reconstituted, via either single-strand annealing or non-homologous end joining. This chain is Protein RecA, found in Deinococcus radiodurans (strain ATCC 13939 / DSM 20539 / JCM 16871 / CCUG 27074 / LMG 4051 / NBRC 15346 / NCIMB 9279 / VKM B-1422 / R1).